Consider the following 266-residue polypeptide: Aliphatic sulfonates import ATP-binding protein SsuB (266 aa).

Residues leucine 23–leucine 244 form the ABC transporter domain. An ATP-binding site is contributed by glycine 55–serine 62.

Belongs to the ABC transporter superfamily. Aliphatic sulfonates importer (TC 3.A.1.17.2) family. As to quaternary structure, the complex is composed of two ATP-binding proteins (SsuB), two transmembrane proteins (SsuC) and a solute-binding protein (SsuA).

The protein localises to the cell inner membrane. It carries out the reaction ATP + H2O + aliphatic sulfonate-[sulfonate-binding protein]Side 1 = ADP + phosphate + aliphatic sulfonateSide 2 + [sulfonate-binding protein]Side 1.. Its function is as follows. Part of the ABC transporter complex SsuABC involved in aliphatic sulfonates import. Responsible for energy coupling to the transport system. This chain is Aliphatic sulfonates import ATP-binding protein SsuB, found in Pectobacterium atrosepticum (strain SCRI 1043 / ATCC BAA-672) (Erwinia carotovora subsp. atroseptica).